A 355-amino-acid polypeptide reads, in one-letter code: Uroporphyrinogen decarboxylase (355 aa).

Substrate contacts are provided by residues 27–31 (RQAGR), Asp-77, Tyr-154, Thr-209, and His-327.

The protein belongs to the uroporphyrinogen decarboxylase family. In terms of assembly, homodimer.

Its subcellular location is the cytoplasm. The catalysed reaction is uroporphyrinogen III + 4 H(+) = coproporphyrinogen III + 4 CO2. The protein operates within porphyrin-containing compound metabolism; protoporphyrin-IX biosynthesis; coproporphyrinogen-III from 5-aminolevulinate: step 4/4. Functionally, catalyzes the decarboxylation of four acetate groups of uroporphyrinogen-III to yield coproporphyrinogen-III. The protein is Uroporphyrinogen decarboxylase of Yersinia pseudotuberculosis serotype O:1b (strain IP 31758).